The following is a 244-amino-acid chain: MFKRIAIAQIRTYTNGVVFKTASKPKRRWIPWTIFGGSFLGGWYLTQHMTFTDLLAYWRYDALPKNADEVVKYHADLNRRLNGLPIVKQLENAGFVQVIANEEENLLVSRALNTPGGVAIPPRVYYNPSRRETVGLYHLGMKLTGYPFLIHGGILATVIEDLMKEAIRLEKGTKNINQETKNLSISYKFPTLANQFVVVRTTDLQQYGNKTKLKAELMDQSGNRTLVKANATFSSEQGNPKEEK.

Transmembrane regions (helical) follow at residues 29 to 49 (WIPW…TQHM) and 139 to 159 (LGMK…ATVI).

The protein belongs to the FMP10 family.

The protein localises to the mitochondrion membrane. This is an uncharacterized protein from Saccharomyces cerevisiae (strain ATCC 204508 / S288c) (Baker's yeast).